The chain runs to 189 residues: MDPTQNTSAGIGGSNGTIRYQTNDGTSTVTVADDSKENLSQVINSIEKTLGVLHQLHLTVTSFTPASQLHLLQRLNSLVMELDNMTKLSEKCNIQIPMEVLNLIDDGKNPDEFTKDVLNSCIARNQVTKGKTDAFKDLRKHILEELEQNFPDEVDMYREIRASSAAVTKRLAQSQSVLPNGDAKVKNEL.

Residues 1–22 (MDPTQNTSAGIGGSNGTIRYQT) are disordered.

It belongs to the Mediator complex subunit 10 family. In terms of assembly, component of the Mediator complex.

It localises to the nucleus. Functionally, component of the Mediator complex, a coactivator involved in the regulated transcription of nearly all RNA polymerase II-dependent genes. Mediator functions as a bridge to convey information from gene-specific regulatory proteins to the basal RNA polymerase II transcription machinery. The Mediator complex, having a compact conformation in its free form, is recruited to promoters by direct interactions with regulatory proteins and serves for the assembly of a functional preinitiation complex with RNA polymerase II and the general transcription factors. The protein is Mediator of RNA polymerase II transcription subunit 10b (MED10B) of Arabidopsis thaliana (Mouse-ear cress).